A 210-amino-acid polypeptide reads, in one-letter code: Phosphate propanoyltransferase (210 aa).

26–28 (ISN) lines the CoA pocket. Zn(2+) contacts are provided by His30 and His32. Residues Lys71 and Arg78 each contribute to the CoA site. Arg84 is a binding site for phosphate. Zn(2+) contacts are provided by Glu90, His138, His140, and His186. Asn193 contributes to the CoA binding site.

The protein belongs to the PduL family. It depends on Zn(2+) as a cofactor.

It localises to the bacterial microcompartment. The enzyme catalyses propanoyl-CoA + phosphate = propanoyl phosphate + CoA. Its pathway is polyol metabolism; 1,2-propanediol degradation. Its function is as follows. Involved in 1,2-propanediol (1,2-PD) utilization within the bacterial microcompartment (BMC) dedicated to 1,2-PD degradation by catalyzing the conversion of propanoyl-CoA to propanoyl-phosphate. Required for optimal growth on 1,2-PD. CoA is regenerated within the BMC (for use by PduP) via this enzyme, although there must also be cofactor transport across the BMC. Directly targeted to the BMC. Functionally, expression of a cosmid containing the full 21-gene pdu operon in E.coli allows E.coli to grow on 1,2-propanediol (1,2-PD) with the appearance of bacterial microcompartments (BMC) in its cytoplasm. The 1,2-PD-specific bacterial microcompartment (BMC) concentrates low levels of 1,2-PD catabolic enzymes, concentrates volatile reaction intermediates thus enhancing pathway flux and keeps the level of toxic, mutagenic propionaldehyde low. The chain is Phosphate propanoyltransferase from Citrobacter freundii.